The sequence spans 184 residues: Peptide deformylase (184 aa).

Residues Cys-111 and His-154 each contribute to the Fe cation site. Glu-155 is an active-site residue. His-158 provides a ligand contact to Fe cation.

The protein belongs to the polypeptide deformylase family. The cofactor is Fe(2+).

The enzyme catalyses N-terminal N-formyl-L-methionyl-[peptide] + H2O = N-terminal L-methionyl-[peptide] + formate. Removes the formyl group from the N-terminal Met of newly synthesized proteins. Requires at least a dipeptide for an efficient rate of reaction. N-terminal L-methionine is a prerequisite for activity but the enzyme has broad specificity at other positions. The chain is Peptide deformylase from Lactobacillus helveticus (strain DPC 4571).